A 104-amino-acid polypeptide reads, in one-letter code: PTS system lactose-specific EIIA component (104 aa).

The PTS EIIA type-3 domain maps to 4–102 (EEATLLGFEI…MKHLIELYKR (99 aa)). The active-site Tele-phosphohistidine intermediate is the His78. His78 carries the phosphohistidine; by HPr modification. Asp81 serves as a coordination point for Mg(2+).

Homotrimer. The cofactor is Mg(2+).

It is found in the cytoplasm. The phosphoenolpyruvate-dependent sugar phosphotransferase system (sugar PTS), a major carbohydrate active transport system, catalyzes the phosphorylation of incoming sugar substrates concomitantly with their translocation across the cell membrane. The enzyme II LacEF PTS system is involved in lactose transport. The chain is PTS system lactose-specific EIIA component from Streptococcus mutans serotype c (strain ATCC 700610 / UA159).